We begin with the raw amino-acid sequence, 1291 residues long: MLDATTFDELRIGLATADDIRRWSYGEVKKPETINYRTLKPEKDGLFGEQIFGPSRDWECSCGKYKRVRFKGIVCERCGVEVTKSSVRRERMGHIELAAPVTHIWYFKGVPSRLGYLLDMAPKDLEKVIYFAAYMVIDVDEEGRHADMPGLENELRLESKTLSDQRDARVAERLQRLETDLAALEEEGAKADQKRRVKDTAEKEMGQLRKSFDEDIARLERVWESFRTLKVGDLKPEDADFNELLDRFGLYFEAFMGAEAIKRRLQAFDLNQEAELLREQIATGKGQKKIRAIKRLRVVSSFLATGNSPAAMVLDVVPVIPPELRPMVQLDGGRFATSDLNDLYRRVINRNNRLRRLLDLGAPEIIVNNEKRMLQEAVDALFDNGRRGRPVTGTGNRALKSLSDMLKGKQGRFRQNLLGKRVDYSGRSVIIVGPQLKLHQCGLPKQMALELFKPFVIKRLIDLSHAQNIKAAKRMVERSRPQVWDVLEEIIRERPVLLNRAPTLHRLGIQAFEPQLVEGKAIQLHPLVCAAFNADFDGDQMAVHLPLSVEAQAEARILMLASNNILKPSDGRPVTLPSQDMIIGLHHLTTVREGAEGEGRAFASVSEAIMAKDQGSLHLNATIKIRLDNYVPSDAADTGTEPVTAVVETTLGRALFNEALPVDYPYVEAVADKGQISAIVNALAERYPKVEVAAALDRIKDAGFYWGTRSGVTVSLSDILTPPNKPQIVAGYEKKAAKINSEFEKGLTTDLERRQELVKIWTEATNEVAEAMSANFPADNTINRMVTSGARGNWLQVRNIAGMRGLVNNPKGEIIPRPIISSYREGLSVAEYFIATHGARKGLADTALRTADSGYLTRRLVDVSQDVIIREDDCGTTKGLDLPIATVDAEGVLTRDPNVENSVFARTLAADAVGTDGTVVAKAGEDVGDVLIDKLVAAGVVDIKVRSVLTCESAVGVCAACYGRSLATGKLVDIGEAVGIIAAQSIGEPGTQLTMRTFHTGGSASADDITQGLPRVQELFEARTPKGASPIAEAAGRIVIEETDKSRKVILTPDNGDEPHVYPVLKRSTLLVEDRQQVELGQQLIVGTVDPKEVLRVKGVREVQKHLVGGVQGVYRSQGVPIHDKHIEVIVRQMLRKVTVVDHGDTDLLPGELVDRSRYNEINRGALQEGKKTASARQEVMGITKASLATESWLSAASFQETTRVLTQAAMEGKSDPLIGLKENVIIGKLIPAGTGLSRYRNVSVEATEEAKAERYPNRIFADDSAFSENDLSFVDFDSFSSDDYTPGTYN.

4 residues coordinate Zn(2+): Cys60, Cys62, Cys75, and Cys78. Residues Asp535, Asp537, and Asp539 each coordinate Mg(2+). Cys874, Cys951, Cys958, and Cys961 together coordinate Zn(2+).

The protein belongs to the RNA polymerase beta' chain family. As to quaternary structure, the RNAP catalytic core consists of 2 alpha, 1 beta, 1 beta' and 1 omega subunit. When a sigma factor is associated with the core the holoenzyme is formed, which can initiate transcription. Mg(2+) is required as a cofactor. Zn(2+) serves as cofactor.

The enzyme catalyses RNA(n) + a ribonucleoside 5'-triphosphate = RNA(n+1) + diphosphate. Functionally, DNA-dependent RNA polymerase catalyzes the transcription of DNA into RNA using the four ribonucleoside triphosphates as substrates. The protein is DNA-directed RNA polymerase subunit beta' of Leifsonia xyli subsp. xyli (strain CTCB07).